The chain runs to 364 residues: Dihydroorotate dehydrogenase (quinone) (364 aa).

Residues 61–65 and Thr85 contribute to the FMN site; that span reads AGYDK. Lys65 contacts substrate. 110-114 is a substrate binding site; it reads NRLGF. Asn139 and Asn170 together coordinate FMN. Asn170 serves as a coordination point for substrate. Ser173 serves as the catalytic Nucleophile. Asn175 contributes to the substrate binding site. The FMN site is built by Lys215 and Ser243. Substrate is bound at residue 244-245; the sequence is NT. FMN is bound by residues Gly266, Gly295, and 316–317; that span reads YT.

This sequence belongs to the dihydroorotate dehydrogenase family. Type 2 subfamily. Monomer. The cofactor is FMN.

It localises to the cell membrane. The enzyme catalyses (S)-dihydroorotate + a quinone = orotate + a quinol. The protein operates within pyrimidine metabolism; UMP biosynthesis via de novo pathway; orotate from (S)-dihydroorotate (quinone route): step 1/1. In terms of biological role, catalyzes the conversion of dihydroorotate to orotate with quinone as electron acceptor. The sequence is that of Dihydroorotate dehydrogenase (quinone) from Brucella canis (strain ATCC 23365 / NCTC 10854 / RM-666).